The chain runs to 220 residues: MKLVVGLGNPGTQYAQTRHNVGWLVVNEVARRWGATWRKEKDAEVAEIRLGPAPGVKVLLVKPQTFMNASGKAVVPRLSFFKLDPGALLVVQDDLDSPFGLMKVRLGGRHGGQNGVRDIIRLLGTEAFARLKLGISRPPAGRDPADWVLSRWRDEEQSTLGDLVRLGADAVERWATAGLAEAQQAFNSTDLRPRPEPVPAPQPADVSGPQETGPAERPEV.

Residue Tyr-14 coordinates tRNA. His-19 serves as the catalytic Proton acceptor. TRNA-binding residues include Phe-66, Asn-68, and Asn-114. The interval 184 to 220 (QAFNSTDLRPRPEPVPAPQPADVSGPQETGPAERPEV) is disordered.

The protein belongs to the PTH family. In terms of assembly, monomer.

It is found in the cytoplasm. The enzyme catalyses an N-acyl-L-alpha-aminoacyl-tRNA + H2O = an N-acyl-L-amino acid + a tRNA + H(+). In terms of biological role, hydrolyzes ribosome-free peptidyl-tRNAs (with 1 or more amino acids incorporated), which drop off the ribosome during protein synthesis, or as a result of ribosome stalling. Its function is as follows. Catalyzes the release of premature peptidyl moieties from peptidyl-tRNA molecules trapped in stalled 50S ribosomal subunits, and thus maintains levels of free tRNAs and 50S ribosomes. This Deinococcus deserti (strain DSM 17065 / CIP 109153 / LMG 22923 / VCD115) protein is Peptidyl-tRNA hydrolase.